Reading from the N-terminus, the 186-residue chain is dCTP deaminase (186 aa).

107–112 (KSTYAR) contributes to the dCTP binding site. E133 functions as the Proton donor/acceptor in the catalytic mechanism. Residues Q152, Y166, and Q176 each contribute to the dCTP site.

Belongs to the dCTP deaminase family. As to quaternary structure, homotrimer.

It catalyses the reaction dCTP + H2O + H(+) = dUTP + NH4(+). Its pathway is pyrimidine metabolism; dUMP biosynthesis; dUMP from dCTP (dUTP route): step 1/2. Functionally, catalyzes the deamination of dCTP to dUTP. In Campylobacter curvus (strain 525.92), this protein is dCTP deaminase.